The sequence spans 208 residues: 3-isopropylmalate dehydratase small subunit (208 aa).

Belongs to the LeuD family. LeuD type 1 subfamily. In terms of assembly, heterodimer of LeuC and LeuD.

The catalysed reaction is (2R,3S)-3-isopropylmalate = (2S)-2-isopropylmalate. The protein operates within amino-acid biosynthesis; L-leucine biosynthesis; L-leucine from 3-methyl-2-oxobutanoate: step 2/4. Catalyzes the isomerization between 2-isopropylmalate and 3-isopropylmalate, via the formation of 2-isopropylmaleate. The polypeptide is 3-isopropylmalate dehydratase small subunit (Gluconobacter oxydans (strain 621H) (Gluconobacter suboxydans)).